The primary structure comprises 510 residues: Bifunctional pantoate ligase/cytidylate kinase (510 aa).

Residues 1 to 276 form a pantoate--beta-alanine ligase region; sequence MKKVIIRKTE…CGETRLIDHV (276 aa). 29 to 36 contacts ATP; the sequence is MGNLHDGH. H36 serves as the catalytic Proton donor. Q61 lines the (R)-pantoate pocket. Beta-alanine is bound at residue Q61. Residue 150–153 participates in ATP binding; sequence GEKD. Q156 is a (R)-pantoate binding site. 187–190 is a binding site for ATP; the sequence is LSSR. The cytidylate kinase stretch occupies residues 277 to 510; it reads FLMKRRPIIA…DRIPKETEIK (234 aa).

It in the N-terminal section; belongs to the pantothenate synthetase family. This sequence in the C-terminal section; belongs to the cytidylate kinase family. Type 1 subfamily.

Its subcellular location is the cytoplasm. The enzyme catalyses (R)-pantoate + beta-alanine + ATP = (R)-pantothenate + AMP + diphosphate + H(+). It carries out the reaction CMP + ATP = CDP + ADP. The catalysed reaction is dCMP + ATP = dCDP + ADP. Its pathway is cofactor biosynthesis; (R)-pantothenate biosynthesis; (R)-pantothenate from (R)-pantoate and beta-alanine: step 1/1. In terms of biological role, catalyzes the condensation of pantoate with beta-alanine in an ATP-dependent reaction via a pantoyl-adenylate intermediate. Functionally, catalyzes the transfer of a phosphate group from ATP to either CMP or dCMP to form CDP or dCDP and ADP, respectively. This chain is Bifunctional pantoate ligase/cytidylate kinase, found in Prochlorococcus marinus (strain MIT 9301).